We begin with the raw amino-acid sequence, 1473 residues long: MAGGAWGRLACYLEFLKKEELKEFQLLLANKAHSRSSSGETPAQPEKTSGMEVASYLVAQYGEQRAWDLALHTWEQMGLRSLCAQAQEGAGHSPSFPYSPSEPHLGSPSQPTSTAVLMPWIHELPAGCTQGSERRVLRQLPDTSGRRWREISASLLYQALPSSPDHESPSQESPNAPTSTAVLGSWGSPPQPSLAPREQEAPGTQWPLDETSGIYYTEIREREREKSEKGRPPWAAVVGTPPQAHTSLQPHHHPWEPSVRESLCSTWPWKNEDFNQKFTQLLLLQRPHPRSQDPLVKRSWPDYVEENRGHLIEIRDLFGPGLDTQEPRIVILQGAAGIGKSTLARQVKEAWGRGQLYGDRFQHVFYFSCRELAQSKVVSLAELIGKDGTATPAPIRQILSRPERLLFILDGVDEPGWVLQEPSSELCLHWSQPQPADALLGSLLGKTILPEASFLITARTTALQNLIPSLEQARWVEVLGFSESSRKEYFYRYFTDERQAIRAFRLVKSNKELWALCLVPWVSWLACTCLMQQMKRKEKLTLTSKTTTTLCLHYLAQALQAQPLGPQLRDLCSLAAEGIWQKKTLFSPDDLRKHGLDGAIISTFLKMGILQEHPIPLSYSFIHLCFQEFFAAMSYVLEDEKGRGKHSNCIIDLEKTLEAYGIHGLFGASTTRFLLGLLSDEGEREMENIFHCRLSQGRNLMQWVPSLQLLLQPHSLESLHCLYETRNKTFLTQVMAHFEEMGMCVETDMELLVCTFCIKFSRHVKKLQLIEGRQHRSTWSPTMVVLFRWVPVTDAYWQILFSVLKVTRNLKELDLSGNSLSHSAVKSLCKTLRRPRCLLETLRLAGCGLTAEDCKDLAFGLRANQTLTELDLSFNVLTDAGAKHLCQRLRQPSCKLQRLQLVSCGLTSDCCQDLASVLSASPSLKELDLQQNNLDDVGVRLLCEGLRHPACKLIRLGLDQTTLSDEMRQELRALEQEKPQLLIFSRRKPSVMTPTEGLDTGEMSNSTSSLKRQRLGSERAASHVAQANLKLLDVSKIFPIAEIAEESSPEVVPVELLCVPSPASQGDLHTKPLGTDDDFWGPTGPVATEVVDKEKNLYRVHFPVAGSYRWPNTGLCFVMREAVTVEIEFCVWDQFLGEINPQHSWMVAGPLLDIKAEPGAVEAVHLPHFVALQGGHVDTSLFQMAHFKEEGMLLEKPARVELHHIVLENPSFSPLGVLLKMIHNALRFIPVTSVVLLYHRVHPEEVTFHLYLIPSDCSIRKAIDDLEMKFQFVRIHKPPPLTPLYMGCRYTVSGSGSGMLEILPKELELCYRSPGEDQLFSEFYVGHLGSGIRLQVKDKKDETLVWEALVKPGDLMPATTLIPPARIAVPSPLDAPQLLHFVDQYREQLIARVTSVEVVLDKLHGQVLSQEQYERVLAENTRPSQMRKLFSLSQSWDRKCKDGLYQALKETHPHLIMELWEKGSKKGLLPLSS.

The Pyrin domain maps to 1–92 (MAGGAWGRLA…CAQAQEGAGH (92 aa)). The tract at residues 90-113 (AGHSPSFPYSPSEPHLGSPSQPTS) is disordered. Ser-93, Ser-99, and Ser-101 each carry phosphoserine; by MAPK11 and MAPK14. Position 107 is a phosphoserine; by MAPK14 (Ser-107). The ZAKalpha motif 1 motif lies at 111–117 (PTSTAVL). The residue at position 112 (Thr-112) is a Phosphothreonine; by MAPK11, MAPK14 and MAP3K20. Ser-113 carries the post-translational modification Phosphoserine; by MAP3K20. Phosphothreonine; by MAP3K20 is present on residues Thr-114 and Thr-129. Ser-132 is modified (phosphoserine; by MAP3K20). Positions 160-254 (LPSSPDHESP…HTSLQPHHHP (95 aa)) are disordered. The residue at position 163 (Ser-163) is a Phosphoserine; by MAPK14. Position 168 is a phosphoserine; by MAPK11 and MAPk14 (Ser-168). Ser-170 is subject to Phosphoserine; by MAPK11 and MAPK14. The span at 170–182 (SQESPNAPTSTAV) shows a compositional bias: polar residues. Ser-173 carries the post-translational modification Phosphoserine; by MAPK11. Residues 177 to 183 (PTSTAVL) carry the ZAKalpha motif 2 motif. Thr-178 carries the phosphothreonine; by MAPK11 modification. Phosphoserine; by MAPK11 and MAP3K20 is present on Ser-179. Thr-180 carries the post-translational modification Phosphothreonine; by MAPK11 and MAP3K20. Residues 218–231 (EIREREREKSEKGR) are compositionally biased toward basic and acidic residues. One can recognise an NACHT domain in the interval 328–637 (RIVILQGAAG…EFFAAMSYVL (310 aa)). 334–341 (GAAGIGKS) contributes to the ATP binding site. LRR repeat units lie at residues 809-830 (NLKELDLSGNSLSHSAVKSLCK), 838-858 (LLETLRLAGCGLTAEDCKDLA), 866-887 (TLTELDLSFNVLTDAGAKHLCQ), 895-915 (KLQRLQLVSCGLTSDCCQDLA), 923-944 (SLKELDLQQNNLDDVGVRLLCE), and 950-973 (ACKLIRLGLDQTTLSDEMRQELRA). Residues 991 to 1017 (VMTPTEGLDTGEMSNSTSSLKRQRLGS) are disordered. The interval 1079–1212 (FWGPTGPVAT…HHIVLENPSF (134 aa)) is ZU5. The FIIND domain maps to 1079-1364 (FWGPTGPVAT…LMPATTLIPP (286 aa)). A UPA region spans residues 1213–1364 (SPLGVLLKMI…LMPATTLIPP (152 aa)). The CARD domain occupies 1374–1463 (DAPQLLHFVD…HLIMELWEKG (90 aa)).

The protein belongs to the NLRP family. As to quaternary structure, interacts (via LRR repeats) with BCL2 and BCL2L1 (via the loop between motifs BH4 and BH3); these interactions reduce NLRP1 inflammasome-induced CASP1 activation and IL1B release, possibly by impairing NLRP1 interaction with PYCARD. Interacts with NOD2; this interaction is enhanced in the presence of muramyl dipeptide (MDP) and increases IL1B release. Interacts with EIF2AK2/PKR; this interaction requires EIF2AK2 activity, is accompanied by EIF2AK2 autophosphorylation and promotes inflammasome assembly in response to danger-associated signals. Interacts with MEFV; this interaction targets NLRP1 to degradation by autophagy, hence preventing excessive IL1B- and IL18-mediated inflammation. Binds (via LRR domain) to dsDNA and dsRNA. Interacts with DPP9; leading to inhibit activation of the inflammasome. DPP9 acts via formation of a ternary complex, composed of a DPP9 homodimer, one full-length NLRP1 protein, and one cleaved C-terminus of NLRP1 (NACHT, LRR and PYD domains-containing protein 1, C-terminus). Interacts with DPP8; leading to inhibit activation of the inflammasome, probably via formation of a ternary complex with DPP8. Interacts with the C-terminal part of NLRP1 (NACHT, LRR and PYD domains-containing protein 1, C-terminus) in absence of pathogens and other damage-associated signals. In terms of assembly, interacts with the N-terminal part of NLRP1 (NACHT, LRR and PYD domains-containing protein 1, N-terminus) in absence of pathogens and other damage-associated signals. Homomultimer; forms the NLRP1 inflammasome polymeric complex, a filament composed of homopolymers of this form in response to pathogens and other damage-associated signals. The NLRP1 inflammasome polymeric complex associates with PYCARD/ASC. Interacts (via CARD domain) with PYCARD/ASC (via CARD domain); leading to pro-caspase-1 (proCASP1) recruitment. Pro-caspase-1 (proCASP1) filament formation increases local enzyme concentration, resulting in trans-autocleavage and activation. Active CASP1 then processes IL1B and IL18 precursors, leading to the release of mature cytokines in the extracellular milieu and inflammatory response. As to quaternary structure, (Microbial infection) Interacts with vaccinia virus protein F1. (Microbial infection) Interacts with human herpes virus 8/HHV-8 proteins ORF45; relieving autoinhibition of the NLRP1 inflammasome. Autocatalytically cleaved. Autocatalytic cleavage in FIIND region occurs constitutively, prior to activation signals, and is required for inflammasome activity (IL1B release), possibly by facilitating CASP1 binding. Both N- and C-terminal parts remain associated non-covalently. Post-translationally, ubiquitinated by the cullin:ZER1/ZYG11B complex in response to pathogen-associated signals, leading to its degradation by the proteasome and subsequent release of the cleaved C-terminal part of the protein (NACHT, LRR and PYD domains-containing protein 1, C-terminus), which polymerizes and forms the NLRP1 inflammasome. In terms of processing, phosphorylated by MAP3K20 isoform ZAKalpha, MAPK11 and MAPK14 in response to UV-B irradiation and ribosome collisions, promoting activation of the NLRP1 inflammasome and pyroptosis. (Microbial infection) Cleaved between Gln-130 and Gly-131 by the Protease 3C from various human enteroviruses and rhinoviruses (EV68, EV71, Coxsackievirus B3, HRV-14 and HRV-16). This cleavage triggers N-glycine-mediated proteasomal degradation of the autoinhibitory NLRP1 N-terminal fragment via the cullin:ZER1/ZYG11B complex which liberates the activating C-terminal fragment and activates NLRP1 inflammasome. Post-translationally, (Microbial infection) Cleaved between Gln-333 and Gly-334 by the 3C-like proteinase nsp5 from human coronavirus SARS-CoV-2. This cleavage liberates the activating C-terminal fragment and activates NLRP1 inflammasome, leading to downstream activation of GSDME and lung epithelial cell death. Widely expressed. Abundantly expressed in primary immune cells (isoform 1 and isoform 2), including in neutrophils, monocytes/macrophages, dendritic cells (mostly Langerhans cells), and B- and T-lymphocytes (at protein level). Strongly expressed in epithelial cells lining the glandular epithelium, such as that of the gastrointestinal tract (stomach, small intestine, colon), the respiratory tract (trachea and bronchi), and the endometrial and endocervical glands, gallbladder, prostate, and breast (at protein level). In testis, expressed in spermatogonia and primary spermatocytes, but not in Sertoli cells (at protein level). In the brain, expressed in neurons, in particular in pyramidal ones and in oligodendrocytes, but not detected in microglia (at protein level). Expressed in adult and fetal ocular tissues, including in adult and 24-week old fetal choroid, sclera, cornea, and optic nerve, as well as in adult retina and fetal retina/retinal pigment epithelium. Highly expressed in the skin throughout the epidermis and in dermal fibroblasts, in both glabrous skin and plantar skin. It is detected in keratinocytes, but not in melanocytes. Expressed in epidermal appendages such as hair follicles.

Its subcellular location is the cytoplasm. It is found in the cytosol. The protein resides in the nucleus. It localises to the inflammasome. It catalyses the reaction ATP + H2O = ADP + phosphate + H(+). NLRP1 inflammasome is activated by cleavage by the Protease 3C from various human enteroviruses and rhinoviruses (EV68, EV71, Coxsackievirus B3, HRV-14 and HRV-16): cleavage promotes ubiquitination and degradation of the N-terminal part, releasing the cleaved C-terminal part of the protein (NACHT, LRR and PYD domains-containing protein 1, C-terminus), which polymerizes and forms the NLRP1 inflammasome. Activated double-stranded RNA: positive-strand RNA viruses such as Semliki forest virus and long dsRNA activate the NLRP1 inflammasome. In contrast to its mouse ortholog, not activated by Bacillus anthracis lethal toxin. NLRP1 inflammasome is inhibited by DPP8 and DPP9, which sequester the C-terminal fragment of NLRP1 (NACHT, LRR and PYD domains-containing protein 1, C-terminus) in a ternary complex, thereby preventing NLRP1 oligomerization and activation. NLRP1 inflammasome is activated by Val-boroPro (Talabostat, PT-100), an inhibitor of dipeptidyl peptidases DPP8 and DPP9. Val-boroPro relieves inhibition of DPP8 and/or DPP9 by promoting disruption of the ternary complex, releasing its C-terminal part from autoinhibition. ATPase activity is activated by dsRNA-binding but not dsDNA-binding. With respect to regulation, (Microbial infection) The NLRP1 inflammasome is activated by human herpes virus 8/HHV-8 protein ORF45, which interacts with the N-terminal part of NLRP1 and promotes its translocation into the nucleus, relieving autoinhibition and leading to activation. Its activity is regulated as follows. (Microbial infection) NLRP1 inflammasome is activated by cleavage by the 3C-like proteinase nsp5 from human coronavirus SARS-CoV-2. Functionally, acts as the sensor component of the NLRP1 inflammasome, which mediates inflammasome activation in response to various pathogen-associated signals, leading to subsequent pyroptosis. Inflammasomes are supramolecular complexes that assemble in the cytosol in response to pathogens and other damage-associated signals and play critical roles in innate immunity and inflammation. Acts as a recognition receptor (PRR): recognizes specific pathogens and other damage-associated signals, such as cleavage by some human enteroviruses and rhinoviruses, double-stranded RNA, UV-B irradiation, or Val-boroPro inhibitor, and mediates the formation of the inflammasome polymeric complex composed of NLRP1, CASP1 and PYCARD/ASC. In response to pathogen-associated signals, the N-terminal part of NLRP1 is degraded by the proteasome, releasing the cleaved C-terminal part of the protein (NACHT, LRR and PYD domains-containing protein 1, C-terminus), which polymerizes and associates with PYCARD/ASC to initiate the formation of the inflammasome complex: the NLRP1 inflammasome recruits pro-caspase-1 (proCASP1) and promotes caspase-1 (CASP1) activation, which subsequently cleaves and activates inflammatory cytokines IL1B and IL18 and gasdermin-D (GSDMD), leading to pyroptosis. In the absence of GSDMD expression, the NLRP1 inflammasome is able to recruit and activate CASP8, leading to activation of gasdermin-E (GSDME). Activation of NLRP1 inflammasome is also required for HMGB1 secretion; the active cytokines and HMGB1 stimulate inflammatory responses. Binds ATP and shows ATPase activity. Plays an important role in antiviral immunity and inflammation in the human airway epithelium. Specifically recognizes a number of pathogen-associated signals: upon infection by human rhinoviruses 14 and 16 (HRV-14 and HRV-16), NLRP1 is cleaved and activated which triggers NLRP1-dependent inflammasome activation and IL18 secretion. Positive-strand RNA viruses, such as Semliki forest virus and long dsRNA activate the NLRP1 inflammasome, triggering IL1B release in a NLRP1-dependent fashion. Acts as a direct sensor for long dsRNA and thus RNA virus infection. May also be activated by muramyl dipeptide (MDP), a fragment of bacterial peptidoglycan, in a NOD2-dependent manner. The NLRP1 inflammasome is also activated in response to UV-B irradiation causing ribosome collisions: ribosome collisions cause phosphorylation and activation of NLRP1 in a MAP3K20-dependent manner, leading to pyroptosis. Its function is as follows. Constitutes the precursor of the NLRP1 inflammasome, which mediates autoproteolytic processing within the FIIND domain to generate the N-terminal and C-terminal parts, which are associated non-covalently in absence of pathogens and other damage-associated signals. Regulatory part that prevents formation of the NLRP1 inflammasome: in absence of pathogens and other damage-associated signals, interacts with the C-terminal part of NLRP1 (NACHT, LRR and PYD domains-containing protein 1, C-terminus), preventing activation of the NLRP1 inflammasome. In response to pathogen-associated signals, this part is ubiquitinated and degraded by the proteasome, releasing the cleaved C-terminal part of the protein, which polymerizes and forms the NLRP1 inflammasome. In terms of biological role, constitutes the active part of the NLRP1 inflammasome. In absence of pathogens and other damage-associated signals, interacts with the N-terminal part of NLRP1 (NACHT, LRR and PYD domains-containing protein 1, N-terminus), preventing activation of the NLRP1 inflammasome. In response to pathogen-associated signals, the N-terminal part of NLRP1 is degraded by the proteasome, releasing this form, which polymerizes and associates with PYCARD/ASC to form of the NLRP1 inflammasome complex: the NLRP1 inflammasome complex then directly recruits pro-caspase-1 (proCASP1) and promotes caspase-1 (CASP1) activation, leading to gasdermin-D (GSDMD) cleavage and subsequent pyroptosis. Functionally, it is unclear whether is involved in inflammasome formation. It is not cleaved within the FIIND domain, does not assemble into specks, nor promote IL1B release. However, in an vitro cell-free system, it has been shown to be activated by MDP. In Homo sapiens (Human), this protein is NACHT, LRR and PYD domains-containing protein 1.